We begin with the raw amino-acid sequence, 156 residues long: UPF0460 protein in nifX 3'region (156 aa).

The protein belongs to the UPF0460 family.

The polypeptide is UPF0460 protein in nifX 3'region (Rhodobacter capsulatus (Rhodopseudomonas capsulata)).